We begin with the raw amino-acid sequence, 437 residues long: Nuclear hormone receptor family member nhr-28 (437 aa).

The nuclear receptor DNA-binding region spans 5-80; it reads KSPCSVCGEA…VGMRKSAVQR (76 aa). NR C4-type zinc fingers lie at residues 8-28 and 44-68; these read CSVC…CRAC and CRAM…FTKC. One can recognise an NR LBD domain in the interval 115 to 376; sequence YEETGMPTLS…ETFYELVSGR (262 aa).

The protein belongs to the nuclear hormone receptor family. Expressed in the pharynx, intestine and hypodermis.

It is found in the nucleus. Orphan nuclear receptor. The sequence is that of Nuclear hormone receptor family member nhr-28 (nhr-28) from Caenorhabditis elegans.